We begin with the raw amino-acid sequence, 191 residues long: UPF0149 protein VV2847 (191 aa).

Belongs to the UPF0149 family.

In Vibrio vulnificus (strain YJ016), this protein is UPF0149 protein VV2847.